A 66-amino-acid polypeptide reads, in one-letter code: DNA-directed RNA polymerase subunit Rpo10 (66 aa).

Cys7, Cys10, Cys44, and Cys45 together coordinate Zn(2+).

The protein belongs to the archaeal Rpo10/eukaryotic RPB10 RNA polymerase subunit family. Part of the RNA polymerase complex. Requires Zn(2+) as cofactor.

Its subcellular location is the cytoplasm. The enzyme catalyses RNA(n) + a ribonucleoside 5'-triphosphate = RNA(n+1) + diphosphate. Its function is as follows. DNA-dependent RNA polymerase (RNAP) catalyzes the transcription of DNA into RNA using the four ribonucleoside triphosphates as substrates. The polypeptide is DNA-directed RNA polymerase subunit Rpo10 (Hyperthermus butylicus (strain DSM 5456 / JCM 9403 / PLM1-5)).